Consider the following 60-residue polypeptide: Metallothionein (60 aa).

A beta region spans residues 1–28 (MDCACATGGSCSCAGSCKCENCKCTSCK). Cys-3, Cys-5, Cys-11, Cys-13, Cys-17, Cys-19, Cys-22, Cys-24, Cys-27, Cys-31, Cys-32, Cys-34, Cys-35, Cys-39, Cys-42, Cys-46, Cys-48, Cys-56, Cys-58, and Cys-59 together coordinate a divalent metal cation. Residues 29–60 (KSCCSCCPSECEKCGQGCVCKGGSSEKCSCCN) are alpha.

This sequence belongs to the metallothionein superfamily. Type 1 family.

In terms of biological role, metallothioneins have a high content of cysteine residues that bind various heavy metals. The sequence is that of Metallothionein (MT-A) from Ambystoma mexicanum (Axolotl).